We begin with the raw amino-acid sequence, 320 residues long: ATP-dependent 6-phosphofructokinase (320 aa).

Gly12 contributes to the ATP binding site. ADP contacts are provided by residues 22–26 and 55–60; these read RGVVR and RYSVSD. ATP-binding positions include 73-74 and 103-106; these read RF and GDGS. Position 104 (Asp104) interacts with Mg(2+). Substrate is bound at residue 126 to 128; sequence TID. Asp128 (proton acceptor) is an active-site residue. An ADP-binding site is contributed by Arg155. Substrate is bound by residues Arg163 and 170–172; that span reads MGR. Residues 186–188, Lys212, and 214–216 contribute to the ADP site; these read GCE and KKH. Substrate contacts are provided by residues Glu223, Arg244, and 250–253; that span reads HIQR.

Belongs to the phosphofructokinase type A (PFKA) family. ATP-dependent PFK group I subfamily. Prokaryotic clade 'B1' sub-subfamily. Homotetramer. Requires Mg(2+) as cofactor.

It localises to the cytoplasm. The enzyme catalyses beta-D-fructose 6-phosphate + ATP = beta-D-fructose 1,6-bisphosphate + ADP + H(+). The protein operates within carbohydrate degradation; glycolysis; D-glyceraldehyde 3-phosphate and glycerone phosphate from D-glucose: step 3/4. With respect to regulation, allosterically activated by ADP and other diphosphonucleosides, and allosterically inhibited by phosphoenolpyruvate. Catalyzes the phosphorylation of D-fructose 6-phosphate to fructose 1,6-bisphosphate by ATP, the first committing step of glycolysis. The protein is ATP-dependent 6-phosphofructokinase of Erwinia tasmaniensis (strain DSM 17950 / CFBP 7177 / CIP 109463 / NCPPB 4357 / Et1/99).